The chain runs to 1004 residues: ABC transporter G family member 25 (1004 aa).

The signal sequence occupies residues 1 to 27 (MAASQLLAAAVAAAVFLAALLVPPARC). Residues 271 to 291 (ATALFGGILIVILSVVLLLVY) traverse the membrane as a helical segment. Residues 343-373 (SDQLAASSNEARHATEGNGKRSKNRKKLAHA) are disordered. Basic and acidic residues predominate over residues 352-361 (EARHATEGNG). Residues 362 to 372 (KRSKNRKKLAH) show a composition bias toward basic residues. Residues 419–659 (VVFKGLTLSI…FSSLGIKVPE (241 aa)) enclose the ABC transporter domain. 451–458 (GPSGAGKT) is a binding site for ATP. 6 helical membrane-spanning segments follow: residues 776 to 796 (ATLQAVDYLILCIAGICIGTI), 804 to 824 (FGVASYGYTIIAVSLLCQLAA), 886 to 906 (LVFLALVYCVTGIGYTFAIWF), 907 to 927 (ELGLAQLCSALIPVVLVLVGT), 943 to 963 (WALEALIIAGAKKYSGVWLIT), and 978 to 998 (FVLCIVIVMLMGVLFRFIALL).

It belongs to the ABC transporter superfamily. ABCG family. Eye pigment precursor importer (TC 3.A.1.204) subfamily.

It is found in the membrane. This is ABC transporter G family member 25 from Oryza sativa subsp. japonica (Rice).